The chain runs to 2346 residues: Acetyl-CoA carboxylase 1 (2346 aa).

Position 1 is an N-acetylmethionine (methionine 1). Phosphoserine occurs at positions 5, 23, 25, 29, 34, 48, 50, and 53. Threonine 58 is subject to Phosphothreonine. Phosphoserine is present on residues serine 78 and serine 80. One can recognise a Biotin carboxylation domain in the interval 117–618 (VIEKVLIANN…DTGWLDRLIA (502 aa)). In terms of domain architecture, ATP-grasp spans 275-466 (SKRILNVPQE…LPAAQLQIAM (192 aa)). 315–320 (GGGGKG) contacts ATP. Glutamate 424, glutamate 437, and asparagine 439 together coordinate Mg(2+). 3 residues coordinate Mn(2+): glutamate 424, glutamate 437, and asparagine 439. Arginine 441 is an active-site residue. Serine 488 carries the phosphoserine modification. Position 610 is a phosphothreonine (threonine 610). Residues 745–819 (FEKENDPSVM…DPGCVLAKMQ (75 aa)) form the Biotinyl-binding domain. Lysine 786 carries the N6-biotinyllysine modification. Serine 835, serine 1201, serine 1216, and serine 1218 each carry phosphoserine. Position 1227 is a phosphothreonine (threonine 1227). Serine 1259, serine 1263, and serine 1273 each carry phosphoserine. The residue at position 1334 (lysine 1334) is an N6-acetyllysine. The 339-residue stretch at 1576 to 1914 (PYVTKDLLQS…SVHSSVPLLN (339 aa)) folds into the CoA carboxyltransferase N-terminal domain. The tract at residues 1576-2234 (PYVTKDLLQS…EDLVKKKIHN (659 aa)) is carboxyltransferase. Residues arginine 1823, lysine 2127, and arginine 2129 each coordinate CoA. One can recognise a CoA carboxyltransferase C-terminal domain in the interval 1918–2234 (PIDRIIEFVP…EDLVKKKIHN (317 aa)). Position 2153 is a phosphothreonine (threonine 2153).

Monomer, homodimer, and homotetramer. Can form filamentous polymers. Interacts in its inactive phosphorylated form with the BRCT domains of BRCA1 which prevents ACACA dephosphorylation and inhibits lipid synthesis. Interacts with MID1IP1; interaction with MID1IP1 promotes oligomerization and increases its activity. Mg(2+) serves as cofactor. It depends on Mn(2+) as a cofactor. Requires biotin as cofactor. Phosphorylation on Ser-1263 is required for interaction with BRCA1. Post-translationally, phosphorylation at Ser-80 by AMPK inactivates enzyme activity. In terms of processing, the biotin cofactor is covalently attached to the central biotinyl-binding domain and is required for the catalytic activity. As to expression, expressed in brain, placenta, skeletal muscle, renal, pancreatic and adipose tissues; expressed at low level in pulmonary tissue; not detected in the liver.

The protein localises to the cytoplasm. The protein resides in the cytosol. It catalyses the reaction hydrogencarbonate + acetyl-CoA + ATP = malonyl-CoA + ADP + phosphate + H(+). Its pathway is lipid metabolism; malonyl-CoA biosynthesis; malonyl-CoA from acetyl-CoA: step 1/1. With respect to regulation, inhibited by phosphorylation. Citrate promotes oligomerization of the protein into filaments that correspond to the most active form of the carboxylase. Inhibited by palmitoyl-CoA. Cytosolic enzyme that catalyzes the carboxylation of acetyl-CoA to malonyl-CoA, the first and rate-limiting step of de novo fatty acid biosynthesis. This is a 2 steps reaction starting with the ATP-dependent carboxylation of the biotin carried by the biotin carboxyl carrier (BCC) domain followed by the transfer of the carboxyl group from carboxylated biotin to acetyl-CoA. This is Acetyl-CoA carboxylase 1 from Homo sapiens (Human).